We begin with the raw amino-acid sequence, 349 residues long: tRNA pseudouridine synthase D (349 aa).

Phe27 is a substrate binding site. Residue Asp80 is the Nucleophile of the active site. Asn129 is a binding site for substrate. The region spanning 155 to 303 (GVPNYFGAQR…VEAARRAMLL (149 aa)) is the TRUD domain. Phe329 contributes to the substrate binding site.

It belongs to the pseudouridine synthase TruD family.

It carries out the reaction uridine(13) in tRNA = pseudouridine(13) in tRNA. Responsible for synthesis of pseudouridine from uracil-13 in transfer RNAs. The polypeptide is tRNA pseudouridine synthase D (Shigella boydii serotype 4 (strain Sb227)).